Consider the following 211-residue polypeptide: Thymidylate kinase (211 aa).

11 to 18 (GPDGAGKT) serves as a coordination point for ATP.

It belongs to the thymidylate kinase family.

The enzyme catalyses dTMP + ATP = dTDP + ADP. Its function is as follows. Phosphorylation of dTMP to form dTDP in both de novo and salvage pathways of dTTP synthesis. This is Thymidylate kinase from Streptococcus pyogenes serotype M6 (strain ATCC BAA-946 / MGAS10394).